The following is a 451-amino-acid chain: Bacteriochlorophyllide d C-8(2)-methyltransferase (451 aa).

Positions 1–118 (MDDDSNQKPL…DDVANNRLKE (118 aa)) constitute a B12-binding domain. A Radical SAM core domain is found at 148 to 377 (VDGTKSIPIY…ALHLVIKSDR (230 aa)). [4Fe-4S] cluster-binding residues include Cys-162, Cys-166, and Cys-169.

This sequence belongs to the radical SAM superfamily. Requires [4Fe-4S] cluster as cofactor.

The protein localises to the cytoplasm. The enzyme catalyses 8,12-diethyl-3-vinylbacteriochlorophyllide d + S-adenosyl-L-methionine = 12-ethyl-8-propyl-3-vinylbacteriochlorophyllide d + S-adenosyl-L-homocysteine + H(+). It carries out the reaction 12-ethyl-8-propyl-3-vinylbacteriochlorophyllide d + S-adenosyl-L-methionine = 12-ethyl-8-isobutyl-3-vinylbacteriochlorophyllide d + S-adenosyl-L-homocysteine + H(+). Its pathway is porphyrin-containing compound metabolism; bacteriochlorophyll biosynthesis (light-independent). In terms of biological role, involved in the biosynthesis of the major light-harvesting pigment bacteriochlorophyll c (BChlc), which confers a significant competitive advantage to green sulfur bacteria living at limiting red and near-infrared light intensities. BchQ is a methyltransferase that adds two consecutive methyl groups to the ethyl carbon at the C-8(2) position of 8,12-diethyl-3-vinylbacteriochlorophyllide d to yield 12-ethyl-8-isobutyl-3-vinylbacteriochlorophyllide d. The chain is Bacteriochlorophyllide d C-8(2)-methyltransferase from Chlorobaculum tepidum (strain ATCC 49652 / DSM 12025 / NBRC 103806 / TLS) (Chlorobium tepidum).